A 462-amino-acid polypeptide reads, in one-letter code: Ammonium transporter Rh type B (462 aa).

Residues 1–11 (MTDPSTNMRLK) are Cytoplasmic-facing. A helical membrane pass occupies residues 12 to 32 (LPITCFILQIILIILFGVLVQ). At 33–62 (YDEDTDAKKHHHGNHSESKSDIENDFYYRY) the chain is on the extracellular side. Asn-46 carries an N-linked (GlcNAc...) asparagine glycan. A helical transmembrane segment spans residues 63 to 83 (PSFQDVHVMIFVGFGFLMTFL). The Cytoplasmic segment spans residues 84-94 (QRYGFSSVGFN). The chain crosses the membrane as a helical span at residues 95–115 (FLIAAFSLQWATLMQGFFHGL). The Extracellular segment spans residues 116–125 (HEGKIHIGVE). Residues 126 to 146 (SMINADFCTGSVLISFGAVLG) form a helical membrane-spanning segment. Over 147-152 (KTSPVQ) the chain is Cytoplasmic. The helical transmembrane segment at 153–173 (LLFMAVFEVTLFAVNEFILLT) threads the bilayer. Residues 174-180 (LLGTKDA) lie on the Extracellular side of the membrane. Residues 181 to 201 (GGSMTIHTFGAYFGLMVTRIL) form a helical membrane-spanning segment. At 202-220 (YRPNLDKSKHKNCSVYHSD) the chain is on the cytoplasmic side. The chain crosses the membrane as a helical span at residues 221 to 241 (LFAMIGTLYLWMFWPSFNSAV). The Extracellular portion of the chain corresponds to 242–302 (TEHGDPQHRT…VAAGTAGEMM (61 aa)). Residues 303–323 (LTPFGSMIVGFLAGIISVLGF) form a helical membrane-spanning segment. At 324–344 (KYLTPILENKLKIQDTCGIHN) the chain is on the cytoplasmic side. A helical membrane pass occupies residues 345–365 (LHGMPGVLGAIVGAVTASLAS). The Extracellular segment spans residues 366–395 (KEVYGEGLEKVFPDVASGKRTASDQGGVQA). Residues 396-416 (ISLAVTLGMALFGGLIVGFIL) traverse the membrane as a helical segment. The Cytoplasmic segment spans residues 417–462 (KLPIFGAPRDTTCFEDSLYWEVPGEEESHEDQLTTVKTEESDKLNS). The segment at 441–462 (EEESHEDQLTTVKTEESDKLNS) is disordered. The segment covering 453-462 (KTEESDKLNS) has biased composition (basic and acidic residues).

This sequence belongs to the ammonium transporter (TC 2.A.49) family. Rh subfamily.

The protein localises to the basolateral cell membrane. The protein resides in the cytoplasmic vesicle membrane. In terms of biological role, functions as an ammonia transporter. May play a role in the elimination of ammonia in the gill. This Oryzias latipes (Japanese rice fish) protein is Ammonium transporter Rh type B (rhbg).